A 436-amino-acid chain; its full sequence is UDP-N-acetylmuramate--L-alanine ligase (436 aa).

Residue 108 to 114 participates in ATP binding; the sequence is GAHGKTS.

This sequence belongs to the MurCDEF family.

The protein resides in the cytoplasm. The enzyme catalyses UDP-N-acetyl-alpha-D-muramate + L-alanine + ATP = UDP-N-acetyl-alpha-D-muramoyl-L-alanine + ADP + phosphate + H(+). Its pathway is cell wall biogenesis; peptidoglycan biosynthesis. In terms of biological role, cell wall formation. This Bacillus cereus (strain ZK / E33L) protein is UDP-N-acetylmuramate--L-alanine ligase.